A 525-amino-acid polypeptide reads, in one-letter code: DNA damage-binding protein cmr1 (525 aa).

A compositionally biased stretch (polar residues) spans 34-50; the sequence is TGVFTSNMPRGTSANQS. 3 disordered regions span residues 34–103, 214–240, and 282–301; these read TGVF…ERAK, DASQ…DPDP, and TSSV…PISG. Residues 83-102 are compositionally biased toward basic and acidic residues; sequence EIAKRKADEEYDRRQEEERA. A WD 1 repeat occupies 182 to 223; it reads ITPERIYSMTFHPSEAKPVIFAGDKMGHLGILDASQEKPTSA. Acidic residues predominate over residues 227–239; the sequence is EDDEDDEDDDDPD. WD repeat units follow at residues 247 to 287, 339 to 379, 384 to 425, 448 to 491, and 494 to 525; these read PHTR…SVEK, LSEK…HTDP, EHQS…SSWK, GRWV…LAQL, and DGIT…CLWM.

The protein belongs to the WD repeat DDB2/WDR76 family.

Functionally, DNA-binding protein that binds to both single- and double-stranded DNA. Binds preferentially to UV-damaged DNA. May be involved in DNA-metabolic processes. The protein is DNA damage-binding protein cmr1 of Emericella nidulans (strain FGSC A4 / ATCC 38163 / CBS 112.46 / NRRL 194 / M139) (Aspergillus nidulans).